Consider the following 182-residue polypeptide: Organic solute transporter subunit beta (182 aa).

The N-terminal stretch at 1 to 20 is a signal peptide; the sequence is MSGLLKYLFGCFILCLLLQG. Over 21–64 the chain is Extracellular; the sequence is KTHMTSATISKPHETIDIEKQNMTGERNSTLAQQLSFPMEDPTN. N-linked (GlcNAc...) asparagine glycosylation is found at Asn-42 and Asn-48. The helical transmembrane segment at 65–85 threads the bilayer; sequence WNYAILALAFVVLFLAFLILA. At 86–182 the chain is on the cytoplasmic side; the sequence is QNSRANRTRK…LYTDSKEDDV (97 aa).

It belongs to the OST-beta family. As to quaternary structure, interacts with slc51a. The Ost-alpha/Ost-beta complex is a heterodimer composed of alpha (slc51a) and beta (slc51b) subunit; may induce the transport of slc51a from the endoplasmic reticulum to the plasma membrane. As to expression, expressed in liver.

The protein resides in the cell membrane. Functionally, essential component of the Ost-alpha/Ost-beta complex, a heterodimer that acts as the intestinal basolateral transporter responsible for bile acid export from enterocytes into portal blood. Efficiently transports the major species of bile acids. May modulate slc51a glycosylation, membrane trafficking and stability activities. Able to transport taurocholate, estrone sulfate, digoxin, and prostaglandin E(2), but not p-aminohippurate or S-dinitrophenyl glutathione. This Leucoraja erinaceus (Little skate) protein is Organic solute transporter subunit beta (slc51b).